We begin with the raw amino-acid sequence, 25 residues long: Small ribosomal subunit protein eS32 (25 aa).

Residues Met-1–Lys-25 form a disordered region.

The protein belongs to the eukaryotic ribosomal protein eS32 family. Component of the small ribosomal subunit.

The protein is Small ribosomal subunit protein eS32 (RPL41) of Quercus suber (Cork oak).